The primary structure comprises 335 residues: Putative T-box protein 7 (335 aa).

Residues 73 to 246 (LWSTFLECGT…NNPFAKGFRN (174 aa)) constitute a DNA-binding region (T-box).

The protein localises to the nucleus. This chain is Putative T-box protein 7, found in Caenorhabditis elegans.